A 73-amino-acid polypeptide reads, in one-letter code: MAKEDVIEVEGKVVDTLPNAMFKVELENGATILAHVSGKIRMHYIRILPGDRVTVELSPYDLTKGRITYRFIK.

The S1-like domain maps to 1-72 (MAKEDVIEVE…TKGRITYRFI (72 aa)).

It belongs to the IF-1 family. In terms of assembly, component of the 30S ribosomal translation pre-initiation complex which assembles on the 30S ribosome in the order IF-2 and IF-3, IF-1 and N-formylmethionyl-tRNA(fMet); mRNA recruitment can occur at any time during PIC assembly.

The protein localises to the cytoplasm. Functionally, one of the essential components for the initiation of protein synthesis. Stabilizes the binding of IF-2 and IF-3 on the 30S subunit to which N-formylmethionyl-tRNA(fMet) subsequently binds. Helps modulate mRNA selection, yielding the 30S pre-initiation complex (PIC). Upon addition of the 50S ribosomal subunit IF-1, IF-2 and IF-3 are released leaving the mature 70S translation initiation complex. The protein is Translation initiation factor IF-1 of Lactobacillus johnsonii (strain CNCM I-12250 / La1 / NCC 533).